The chain runs to 197 residues: CASP-like protein 0U1 (197 aa).

Topologically, residues 1–13 are cytoplasmic; that stretch reads MDDFDPTVTNSPK. Residues 14 to 34 form a helical membrane-spanning segment; the sequence is FRLIAVQCLFSITAFAAMLSQ. Residues 35–63 are Extracellular-facing; it reads RHGLAGPDEMTLEECGPQACGYQKFSNFK. A helical transmembrane segment spans residues 64 to 84; it reads FLIAVCIIYAVFSLVVMAAYL. Residues 85-99 lie on the Cytoplasmic side of the membrane; that stretch reads LQRVPPPVTELTAYT. Residues 100-120 form a helical membrane-spanning segment; sequence VMNVLLFAAFAMSATSCNITI. The Extracellular segment spans residues 121–135; it reads VDPVYPVCKRATSAK. A helical membrane pass occupies residues 136–156; it reads ASIAFAFFTWLAVCFSMLFTY. The Cytoplasmic segment spans residues 157 to 197; sequence KEWRDVDYHVPGSGAYEFVPGVTSGSSRSSYPPQASSSSYA. Residues 178-197 form a disordered region; it reads VTSGSSRSSYPPQASSSSYA. Residues 180–197 are compositionally biased toward low complexity; it reads SGSSRSSYPPQASSSSYA.

Belongs to the Casparian strip membrane proteins (CASP) family. In terms of assembly, homodimer and heterodimers.

It is found in the cell membrane. The polypeptide is CASP-like protein 0U1 (Micromonas commoda (strain RCC299 / NOUM17 / CCMP2709) (Picoplanktonic green alga)).